The sequence spans 415 residues: Granaticin polyketide putative beta-ketoacyl synthase 2 (415 aa).

Positions Arg-6–Leu-406 constitute a Ketosynthase family 3 (KS3) domain.

The protein belongs to the thiolase-like superfamily. Beta-ketoacyl-ACP synthases family.

Its pathway is antibiotic biosynthesis; granaticin biosynthesis. This Streptomyces violaceoruber protein is Granaticin polyketide putative beta-ketoacyl synthase 2 (gra-orf2).